Reading from the N-terminus, the 633-residue chain is ATP-dependent clpX-like chaperone, mitochondrial (633 aa).

A mitochondrion-targeting transit peptide spans 1–56 (MSSCGACTCGAAAARLLTTSLTSAQRGISCGRIHVPVLGRLGTLDTQILRRAPLRT). The interval 65–101 (ASKDGTNKDGSGDGNKKSVTEGSSKKSGSGNSGKGGN) is disordered. Residues 69-83 (GTNKDGSGDGNKKSV) show a composition bias toward basic and acidic residues. The span at 84 to 93 (TEGSSKKSGS) shows a compositional bias: low complexity. Residues 93-146 (SGNSGKGGNQLRCPKCGDLCTHVETFVSSTRFVKCEKCHHFFVVLSEADSKKSI) form the ClpX-type ZB domain. Zn(2+) contacts are provided by Cys105, Cys108, Cys127, and Cys130. An ATP-binding site is contributed by 294–301 (PTGSGKTL). Lys437 carries the N6-acetyllysine modification. Basic and acidic residues predominate over residues 598-610 (KEPGYIRAPSKES). The interval 598–633 (KEPGYIRAPSKESSEEDYDSGVEEDGWPRQADAANS) is disordered. A compositionally biased stretch (acidic residues) spans 611-622 (SEEDYDSGVEED). At Ser617 the chain carries Phosphoserine.

This sequence belongs to the ClpX chaperone family. As to quaternary structure, homohexamer that forms a ring structure; this hexamerization requires ATP binding. Component of the ClpXP complex formed by the assembly of two CLPP heptameric rings with two CLPX hexameric rings, giving rise to a symmetrical structure with two central CLPP rings flanked by a CLPX ring at either end of the complex. Interacts with TFAM.

It localises to the mitochondrion. It is found in the mitochondrion matrix. The protein resides in the mitochondrion nucleoid. It carries out the reaction ATP + H2O = ADP + phosphate + H(+). In terms of biological role, ATP-dependent chaperone that functions as an unfoldase. As part of the ClpXP protease complex, it recognizes specific protein substrates, unfolds them using energy derived from ATP hydrolysis, and then translocates them to the proteolytic subunit (CLPP) of the ClpXP complex for degradation. Thanks to its chaperone activity, it also functions in the incorporation of the pyridoxal phosphate cofactor into 5-aminolevulinate synthase, thereby activating 5-aminolevulinate (ALA) synthesis, the first step in heme biosynthesis. This chaperone is also involved in the control of mtDNA nucleoid distribution, by regulating mitochondrial transcription factor A (TFAM) activity. In Rattus norvegicus (Rat), this protein is ATP-dependent clpX-like chaperone, mitochondrial.